The primary structure comprises 460 residues: ATP synthase subunit beta (460 aa).

150-157 (GGAGVGKT) contributes to the ATP binding site.

Belongs to the ATPase alpha/beta chains family. In terms of assembly, F-type ATPases have 2 components, CF(1) - the catalytic core - and CF(0) - the membrane proton channel. CF(1) has five subunits: alpha(3), beta(3), gamma(1), delta(1), epsilon(1). CF(0) has three main subunits: a(1), b(2) and c(9-12). The alpha and beta chains form an alternating ring which encloses part of the gamma chain. CF(1) is attached to CF(0) by a central stalk formed by the gamma and epsilon chains, while a peripheral stalk is formed by the delta and b chains.

It is found in the cell inner membrane. It carries out the reaction ATP + H2O + 4 H(+)(in) = ADP + phosphate + 5 H(+)(out). Functionally, produces ATP from ADP in the presence of a proton gradient across the membrane. The catalytic sites are hosted primarily by the beta subunits. This Serratia proteamaculans (strain 568) protein is ATP synthase subunit beta.